The primary structure comprises 136 residues: NADPH-dependent 7-cyano-7-deazaguanine reductase (136 aa).

Cys53 (thioimide intermediate) is an active-site residue. The Proton donor role is filled by Asp60. Substrate-binding positions include 75-77 (VEL) and 94-95 (HE).

This sequence belongs to the GTP cyclohydrolase I family. QueF type 1 subfamily.

It is found in the cytoplasm. It catalyses the reaction 7-aminomethyl-7-carbaguanine + 2 NADP(+) = 7-cyano-7-deazaguanine + 2 NADPH + 3 H(+). The protein operates within tRNA modification; tRNA-queuosine biosynthesis. Catalyzes the NADPH-dependent reduction of 7-cyano-7-deazaguanine (preQ0) to 7-aminomethyl-7-deazaguanine (preQ1). The chain is NADPH-dependent 7-cyano-7-deazaguanine reductase from Trichormus variabilis (strain ATCC 29413 / PCC 7937) (Anabaena variabilis).